A 307-amino-acid chain; its full sequence is 4-hydroxy-3-methylbut-2-enyl diphosphate reductase (307 aa).

C12 contacts [4Fe-4S] cluster. (2E)-4-hydroxy-3-methylbut-2-enyl diphosphate-binding residues include H41 and H74. 2 residues coordinate dimethylallyl diphosphate: H41 and H74. 2 residues coordinate isopentenyl diphosphate: H41 and H74. A [4Fe-4S] cluster-binding site is contributed by C96. Residue H124 participates in (2E)-4-hydroxy-3-methylbut-2-enyl diphosphate binding. H124 is a binding site for dimethylallyl diphosphate. H124 lines the isopentenyl diphosphate pocket. Catalysis depends on E126, which acts as the Proton donor. T165 contributes to the (2E)-4-hydroxy-3-methylbut-2-enyl diphosphate binding site. C195 is a binding site for [4Fe-4S] cluster. Positions 223, 224, 225, and 267 each coordinate (2E)-4-hydroxy-3-methylbut-2-enyl diphosphate. S223, S224, N225, and S267 together coordinate dimethylallyl diphosphate. S223, S224, N225, and S267 together coordinate isopentenyl diphosphate.

This sequence belongs to the IspH family. The cofactor is [4Fe-4S] cluster.

The enzyme catalyses isopentenyl diphosphate + 2 oxidized [2Fe-2S]-[ferredoxin] + H2O = (2E)-4-hydroxy-3-methylbut-2-enyl diphosphate + 2 reduced [2Fe-2S]-[ferredoxin] + 2 H(+). The catalysed reaction is dimethylallyl diphosphate + 2 oxidized [2Fe-2S]-[ferredoxin] + H2O = (2E)-4-hydroxy-3-methylbut-2-enyl diphosphate + 2 reduced [2Fe-2S]-[ferredoxin] + 2 H(+). Its pathway is isoprenoid biosynthesis; dimethylallyl diphosphate biosynthesis; dimethylallyl diphosphate from (2E)-4-hydroxy-3-methylbutenyl diphosphate: step 1/1. The protein operates within isoprenoid biosynthesis; isopentenyl diphosphate biosynthesis via DXP pathway; isopentenyl diphosphate from 1-deoxy-D-xylulose 5-phosphate: step 6/6. In terms of biological role, catalyzes the conversion of 1-hydroxy-2-methyl-2-(E)-butenyl 4-diphosphate (HMBPP) into a mixture of isopentenyl diphosphate (IPP) and dimethylallyl diphosphate (DMAPP). Acts in the terminal step of the DOXP/MEP pathway for isoprenoid precursor biosynthesis. The polypeptide is 4-hydroxy-3-methylbut-2-enyl diphosphate reductase (Magnetococcus marinus (strain ATCC BAA-1437 / JCM 17883 / MC-1)).